The sequence spans 145 residues: 3-hydroxyacyl-[acyl-carrier-protein] dehydratase FabZ (145 aa).

H51 is a catalytic residue.

The protein belongs to the thioester dehydratase family. FabZ subfamily.

It is found in the cytoplasm. The enzyme catalyses a (3R)-hydroxyacyl-[ACP] = a (2E)-enoyl-[ACP] + H2O. Its function is as follows. Involved in unsaturated fatty acids biosynthesis. Catalyzes the dehydration of short chain beta-hydroxyacyl-ACPs and long chain saturated and unsaturated beta-hydroxyacyl-ACPs. The sequence is that of 3-hydroxyacyl-[acyl-carrier-protein] dehydratase FabZ from Macrococcus caseolyticus (strain JCSC5402) (Macrococcoides caseolyticum).